The following is a 247-amino-acid chain: Orotidine 5'-phosphate decarboxylase (247 aa).

Substrate is bound by residues D22, K44, 71 to 80, T131, R192, Q201, G221, and R222; that span reads DLKFHDIPNT. The active-site Proton donor is K73.

It belongs to the OMP decarboxylase family. Type 1 subfamily. Homodimer.

The enzyme catalyses orotidine 5'-phosphate + H(+) = UMP + CO2. The protein operates within pyrimidine metabolism; UMP biosynthesis via de novo pathway; UMP from orotate: step 2/2. Its function is as follows. Catalyzes the decarboxylation of orotidine 5'-monophosphate (OMP) to uridine 5'-monophosphate (UMP). The sequence is that of Orotidine 5'-phosphate decarboxylase from Pectobacterium carotovorum subsp. carotovorum (strain PC1).